Here is a 297-residue protein sequence, read N- to C-terminus: Haloalkane dehalogenase (297 aa).

One can recognise an AB hydrolase-1 domain in the interval 47 to 148 (PPIVLLHGEP…AIARLVVANG (102 aa)). Catalysis depends on Asp123, which acts as the Nucleophile. Asp250 (proton donor) is an active-site residue. His279 serves as the catalytic Proton acceptor.

Belongs to the haloalkane dehalogenase family. Type 1 subfamily. Monomer.

It carries out the reaction 1-haloalkane + H2O = a halide anion + a primary alcohol + H(+). Its function is as follows. Catalyzes hydrolytic cleavage of carbon-halogen bonds in halogenated aliphatic compounds, leading to the formation of the corresponding primary alcohols, halide ions and protons. The chain is Haloalkane dehalogenase from Mycobacterium marinum (strain ATCC BAA-535 / M).